The chain runs to 20 residues: Peptide encoded by miPEP171b (20 aa).

In terms of tissue distribution, lateral root initiations.

Functionally, regulatory peptide encoded by the primary transcript (pri-miR171b) of the microRNA miR171b that enhances the accumulation of its corresponding mature miRNA. Acts probably as a transcriptional activator of its corresponding pri-miRNA. Has no effect on the accumulation of other miRNAs. Addition of synthetic miPEP171b increases the abundance of miR171b, with consequent reduction of lateral root formation. The polypeptide is Peptide encoded by miPEP171b (Medicago truncatula (Barrel medic)).